The chain runs to 104 residues: Probable guanidinium efflux system subunit GdnD (104 aa).

Transmembrane regions (helical) follow at residues 3–23, 31–51, 58–78, and 84–104; these read WICL…MNQF, WIFL…LAME, AYAV…ILFY, and GKRI…KLIS.

This sequence belongs to the drug/metabolite transporter (DMT) superfamily. Small multidrug resistance (SMR) (TC 2.A.7.1) family. YkkC/YkkD subfamily. In terms of assembly, the efflux pump is composed of GdnC and GdnD.

It is found in the cell membrane. Functionally, probably involved in guanidinium transport. This chain is Probable guanidinium efflux system subunit GdnD, found in Bacillus licheniformis (strain ATCC 14580 / DSM 13 / JCM 2505 / CCUG 7422 / NBRC 12200 / NCIMB 9375 / NCTC 10341 / NRRL NRS-1264 / Gibson 46).